The chain runs to 360 residues: Phospho-N-acetylmuramoyl-pentapeptide-transferase (360 aa).

10 helical membrane-spanning segments follow: residues 27–47 (GATATALFFVFFFGPRIIAAL), 74–94 (TMGGLMILSGLIVSTLLWANL), 99–119 (VWVVLFVTTGFGLIGFYDDYL), 135–155 (LLLEVGIAGAACYAMMLLGTP), 165–185 (INGFAVDLGLFFLVVGPFVIV), 199–219 (GLAIVPVMIAAGTFGVIAYLA), 236–256 (AGELSVVTGAVIGAGLGFLWF), 263–283 (IFMGDTGSLALGGLLGAVAVA), 288–308 (IVLAIVGGLFVLETLSVIVQV), and 337–357 (QVVVRFWIIAFVLALIGLSTL).

It belongs to the glycosyltransferase 4 family. MraY subfamily. Mg(2+) is required as a cofactor.

It is found in the cell inner membrane. It catalyses the reaction UDP-N-acetyl-alpha-D-muramoyl-L-alanyl-gamma-D-glutamyl-meso-2,6-diaminopimeloyl-D-alanyl-D-alanine + di-trans,octa-cis-undecaprenyl phosphate = di-trans,octa-cis-undecaprenyl diphospho-N-acetyl-alpha-D-muramoyl-L-alanyl-D-glutamyl-meso-2,6-diaminopimeloyl-D-alanyl-D-alanine + UMP. It participates in cell wall biogenesis; peptidoglycan biosynthesis. Catalyzes the initial step of the lipid cycle reactions in the biosynthesis of the cell wall peptidoglycan: transfers peptidoglycan precursor phospho-MurNAc-pentapeptide from UDP-MurNAc-pentapeptide onto the lipid carrier undecaprenyl phosphate, yielding undecaprenyl-pyrophosphoryl-MurNAc-pentapeptide, known as lipid I. The protein is Phospho-N-acetylmuramoyl-pentapeptide-transferase of Methylocella silvestris (strain DSM 15510 / CIP 108128 / LMG 27833 / NCIMB 13906 / BL2).